A 77-amino-acid chain; its full sequence is Exodeoxyribonuclease 7 small subunit (77 aa).

It belongs to the XseB family. In terms of assembly, heterooligomer composed of large and small subunits.

The protein resides in the cytoplasm. It catalyses the reaction Exonucleolytic cleavage in either 5'- to 3'- or 3'- to 5'-direction to yield nucleoside 5'-phosphates.. Bidirectionally degrades single-stranded DNA into large acid-insoluble oligonucleotides, which are then degraded further into small acid-soluble oligonucleotides. This Chromobacterium violaceum (strain ATCC 12472 / DSM 30191 / JCM 1249 / CCUG 213 / NBRC 12614 / NCIMB 9131 / NCTC 9757 / MK) protein is Exodeoxyribonuclease 7 small subunit.